The sequence spans 538 residues: Bifunctional purine biosynthesis protein PurH (538 aa).

The region spanning 8-158 (IPAPDKVEIK…KNHAYVTILT (151 aa)) is the MGS-like domain.

The protein belongs to the PurH family.

The enzyme catalyses (6R)-10-formyltetrahydrofolate + 5-amino-1-(5-phospho-beta-D-ribosyl)imidazole-4-carboxamide = 5-formamido-1-(5-phospho-D-ribosyl)imidazole-4-carboxamide + (6S)-5,6,7,8-tetrahydrofolate. It carries out the reaction IMP + H2O = 5-formamido-1-(5-phospho-D-ribosyl)imidazole-4-carboxamide. It participates in purine metabolism; IMP biosynthesis via de novo pathway; 5-formamido-1-(5-phospho-D-ribosyl)imidazole-4-carboxamide from 5-amino-1-(5-phospho-D-ribosyl)imidazole-4-carboxamide (10-formyl THF route): step 1/1. Its pathway is purine metabolism; IMP biosynthesis via de novo pathway; IMP from 5-formamido-1-(5-phospho-D-ribosyl)imidazole-4-carboxamide: step 1/1. This Rhizobium etli (strain ATCC 51251 / DSM 11541 / JCM 21823 / NBRC 15573 / CFN 42) protein is Bifunctional purine biosynthesis protein PurH.